The sequence spans 79 residues: Cytochrome b-c1 complex subunit 10 (79 aa).

Residues 1–23 (MISFFPNKPMYHVQPHISFITPE) lie on the Mitochondrial matrix side of the membrane. Residues 24–47 (RTMKTIPAFSRWAFAAVAGVFVFA) form a helical membrane-spanning segment. Topologically, residues 48–79 (MQVPKVKTTILQPIAFIGDHFKDKTPEEDKWL) are mitochondrial intermembrane.

This sequence belongs to the UQCR11/QCR10 family. In terms of assembly, component of the ubiquinol-cytochrome c oxidoreductase (cytochrome b-c1 complex, complex III, CIII), a multisubunit enzyme composed of 3 respiratory subunits cytochrome b, cytochrome c1 and Rieske protein, 2 core protein subunits, and additional low-molecular weight protein subunits. The complex exists as an obligatory dimer and forms supercomplexes (SCs) in the inner mitochondrial membrane with cytochrome c oxidase (complex IV, CIV).

The protein localises to the mitochondrion inner membrane. In terms of biological role, component of the ubiquinol-cytochrome c oxidoreductase, a multisubunit transmembrane complex that is part of the mitochondrial electron transport chain which drives oxidative phosphorylation. The respiratory chain contains 3 multisubunit complexes succinate dehydrogenase (complex II, CII), ubiquinol-cytochrome c oxidoreductase (cytochrome b-c1 complex, complex III, CIII) and cytochrome c oxidase (complex IV, CIV), that cooperate to transfer electrons derived from NADH and succinate to molecular oxygen, creating an electrochemical gradient over the inner membrane that drives transmembrane transport and the ATP synthase. The cytochrome b-c1 complex catalyzes electron transfer from ubiquinol to cytochrome c, linking this redox reaction to translocation of protons across the mitochondrial inner membrane, with protons being carried across the membrane as hydrogens on the quinol. In the process called Q cycle, 2 protons are consumed from the matrix, 4 protons are released into the intermembrane space and 2 electrons are passed to cytochrome c. QCR10 has a role in CIII assembly and RIP1 stability. The sequence is that of Cytochrome b-c1 complex subunit 10 from Schizosaccharomyces pombe (strain 972 / ATCC 24843) (Fission yeast).